A 57-amino-acid polypeptide reads, in one-letter code: UPF0391 membrane protein RPB_2024 (57 aa).

Helical transmembrane passes span 4-24 (WVVT…GGIA) and 30-50 (IAKV…VVGL).

The protein belongs to the UPF0391 family.

Its subcellular location is the cell membrane. This is UPF0391 membrane protein RPB_2024 from Rhodopseudomonas palustris (strain HaA2).